The chain runs to 250 residues: NADH-quinone oxidoreductase subunit C (250 aa).

The protein belongs to the complex I 30 kDa subunit family. As to quaternary structure, NDH-1 is composed of 14 different subunits. Subunits NuoB, C, D, E, F, and G constitute the peripheral sector of the complex.

Its subcellular location is the cell inner membrane. It catalyses the reaction a quinone + NADH + 5 H(+)(in) = a quinol + NAD(+) + 4 H(+)(out). In terms of biological role, NDH-1 shuttles electrons from NADH, via FMN and iron-sulfur (Fe-S) centers, to quinones in the respiratory chain. The immediate electron acceptor for the enzyme in this species is believed to be ubiquinone. Couples the redox reaction to proton translocation (for every two electrons transferred, four hydrogen ions are translocated across the cytoplasmic membrane), and thus conserves the redox energy in a proton gradient. This chain is NADH-quinone oxidoreductase subunit C, found in Xylella fastidiosa (strain 9a5c).